A 284-amino-acid chain; its full sequence is 4-diphosphocytidyl-2-C-methyl-D-erythritol kinase (284 aa).

Residue lysine 14 is part of the active site. 98 to 108 (PMGGGLGGGSS) is an ATP binding site. Aspartate 140 is an active-site residue.

The protein belongs to the GHMP kinase family. IspE subfamily.

The catalysed reaction is 4-CDP-2-C-methyl-D-erythritol + ATP = 4-CDP-2-C-methyl-D-erythritol 2-phosphate + ADP + H(+). The protein operates within isoprenoid biosynthesis; isopentenyl diphosphate biosynthesis via DXP pathway; isopentenyl diphosphate from 1-deoxy-D-xylulose 5-phosphate: step 3/6. In terms of biological role, catalyzes the phosphorylation of the position 2 hydroxy group of 4-diphosphocytidyl-2C-methyl-D-erythritol. This Shewanella baltica (strain OS195) protein is 4-diphosphocytidyl-2-C-methyl-D-erythritol kinase.